A 185-amino-acid polypeptide reads, in one-letter code: Large ribosomal subunit protein uL10 (185 aa).

Residues 165-185 are disordered; that stretch reads LRAKKEEQGGAGTPAPAEAAE.

Belongs to the universal ribosomal protein uL10 family. Part of the ribosomal stalk of the 50S ribosomal subunit. The N-terminus interacts with L11 and the large rRNA to form the base of the stalk. The C-terminus forms an elongated spine to which L12 dimers bind in a sequential fashion forming a multimeric L10(L12)X complex.

Its function is as follows. Forms part of the ribosomal stalk, playing a central role in the interaction of the ribosome with GTP-bound translation factors. The polypeptide is Large ribosomal subunit protein uL10 (Streptomyces griseus subsp. griseus (strain JCM 4626 / CBS 651.72 / NBRC 13350 / KCC S-0626 / ISP 5235)).